A 67-amino-acid polypeptide reads, in one-letter code: uncharacterized protein (67 aa).

This is an uncharacterized protein from Saccharolobus islandicus (Sulfolobus islandicus).